The primary structure comprises 545 residues: Acetamidase (545 aa).

Catalysis depends on charge relay system residues Lys-130 and Ser-205. Ser-229 acts as the Acyl-ester intermediate in catalysis.

This sequence belongs to the amidase family.

It carries out the reaction a monocarboxylic acid amide + H2O = a monocarboxylate + NH4(+). The catalysed reaction is acetamide + H2O = acetate + NH4(+). Its function is as follows. Allows acetamide to be used as a sole carbon or nitrogen source. This Aspergillus oryzae (strain ATCC 42149 / RIB 40) (Yellow koji mold) protein is Acetamidase (amdS).